The sequence spans 363 residues: Cytochrome b (363 aa).

Transmembrane regions (helical) follow at residues 23–43 (VGFI…LLTF), 67–89 (WFVR…IHII), 102–122 (SWYS…TGYV), and 164–184 (FFIL…LHLY). Positions 73 and 87 each coordinate heme b. Heme b is bound by residues H168 and H182. An a ubiquinone-binding site is contributed by H187. A run of 4 helical transmembrane segments spans residues 210-230 (ILFS…PQVG), 271-291 (VFPT…LLII), 309-329 (RVWT…GCIG), and 332-352 (VINL…TTFV).

It belongs to the cytochrome b family. The main subunits of complex b-c1 are: cytochrome b, cytochrome c1 and the Rieske protein. It depends on heme b as a cofactor.

It is found in the mitochondrion inner membrane. Functionally, component of the ubiquinol-cytochrome c reductase complex (complex III or cytochrome b-c1 complex) that is part of the mitochondrial respiratory chain. The b-c1 complex mediates electron transfer from ubiquinol to cytochrome c. Contributes to the generation of a proton gradient across the mitochondrial membrane that is then used for ATP synthesis. This is Cytochrome b (MT-CYB) from Theileria parva (East coast fever infection agent).